The following is a 345-amino-acid chain: Beta-2-glycoprotein 1 (345 aa).

The N-terminal stretch at 1 to 19 (MISPVLILFSSFLCHVAIA) is a signal peptide. Sushi domains lie at 21–81 (RTCP…KCTP), 82–139 (RVCP…VCAP), 140–202 (ITCP…ECRE), and 203–262 (VKCP…SCKA). 11 disulfide bridges follow: Cys-23/Cys-66, Cys-51/Cys-79, Cys-84/Cys-124, Cys-110/Cys-137, Cys-142/Cys-188, Cys-174/Cys-200, Cys-205/Cys-248, Cys-234/Cys-260, Cys-264/Cys-315, Cys-300/Cys-325, and Cys-307/Cys-345. Thr-33 is a glycosylation site (O-linked (GalNAc...) threonine). A glycan (O-linked (GalNAc...) threonine) is linked at Thr-149. 3 N-linked (GlcNAc...) asparagine glycosylation sites follow: Asn-162, Asn-183, and Asn-193. An N-linked (GlcNAc...) asparagine glycan is attached at Asn-253. Residues 263–345 (SCKVPVKKAT…KTDASDVKPC (83 aa)) are sushi-like.

As to expression, expressed by the liver and secreted in plasma.

Its subcellular location is the secreted. Functionally, binds to various kinds of negatively charged substances such as heparin, phospholipids, and dextran sulfate. May prevent activation of the intrinsic blood coagulation cascade by binding to phospholipids on the surface of damaged cells. This chain is Beta-2-glycoprotein 1 (APOH), found in Pan troglodytes (Chimpanzee).